Here is a 118-residue protein sequence, read N- to C-terminus: uncharacterized protein (118 aa).

3 helical membrane-spanning segments follow: residues Ile22–Ala44, Leu54–Arg71, and Pro78–Leu99.

Its subcellular location is the cell membrane. This is an uncharacterized protein from Archaeoglobus fulgidus (strain ATCC 49558 / DSM 4304 / JCM 9628 / NBRC 100126 / VC-16).